The primary structure comprises 228 residues: Cytidylate kinase (228 aa).

Residue 10 to 18 coordinates ATP; that stretch reads GPSGSGKGT.

It belongs to the cytidylate kinase family. Type 1 subfamily.

The protein localises to the cytoplasm. It catalyses the reaction CMP + ATP = CDP + ADP. It carries out the reaction dCMP + ATP = dCDP + ADP. The sequence is that of Cytidylate kinase from Acinetobacter baumannii (strain AB0057).